A 38-amino-acid chain; its full sequence is uncharacterized protein (38 aa).

A helical transmembrane segment spans residues phenylalanine 10–isoleucine 32.

It localises to the membrane. This is an uncharacterized protein from Saccharomyces cerevisiae (strain ATCC 204508 / S288c) (Baker's yeast).